The chain runs to 1748 residues: MAFQLALDALSSTTHRDSISAPLLDSSVSQLQSSLELFPYTVPKELVPQLNRMGIQVSGLTSTPHPHAAHKTLELNLLFNHWAKSCNVDSAVVFMKPSKFFKLQEKNSHFKSLHNYRLHPHDSNRYPHPSTSLPTEKRFYIHDSLMYFTPHQISGLFESCPNLLSLYASLVVPPESSMTDLSLNPDLYRYSIHKSTLHYTPEGHSAGSYNQPVNALDWLKISAIQTPSLSLSVSVLESWGPLHSLLIERSSQTQNPDSQKIKDLISFQTPQALILPNPDSLAVPLRHRLVPQKTYDALFTYTRATRTLRTSDPAGFVRTQSNKPEFNWVTSQAWDNLQTYALLTASYRPPVSYTLHRSPLTKLKELLTRNALKLAAMASPALTLAIFTTMTALNTNSSKALSFSALKIHLLNPLTGPELLHFQTSVLQQKNSAPLSQAEAKQELDKSAVPAPSEHDSSASQSTSLSLSASSQLLSTEKHPGSELSSKAIPVSTSCPSASKQLAPPLTAESHSSVNALLRKFLGPNSPQSNLDNYNLHLHPESFTLGWKRRPLLLDSHSSFLPSSCLQPPASPSIAAAPHPLPPAQKPPRPPTTVPTPKPLASPSQTQAAQPATQSPPSIPQTAPVTSLLPAPLETDDSCAGPISTFQDLFPASYYPHTANFPCRSKIPGYLEAPYPPLDCMLVALSAQMPQSPQELWSALNTLMPLSALTSPSLRVLGLGTEELTALSYYYHFQAEIHSDNEIYRFGIQTASTKLCLIRDSGPPAHFTAPDPLRAGSPPSRSQTNENSLRRSLLGFRLNGNLLPIDQVHSFTSEPSRAKNLASNMKNGFDGILTTLAALSSLSSGPSPRDRIFTLDGICDFALPKTVDLIHLSGFAGCGKTHPIQQLLKTPHFHNFRVVTPTTNLRSEWKSDMALPAHHNWRFSTWESALLKHAEILVIDEIYKLPRGYLDLSLIADPTVKLVILLGDPLQGEYHSTSAHSSNLRLSSEIPRLLPFIDYYCYWSYRVPKCVAKLFSLPCFNPSEGFIKTTLDFFPSANNLVNSHSVVHISEACGWNAVTISSSQGCTFSDPAFIHLDRNTALLSPSNCLVALTRSRSGVYFKGDFTFLSSLSGSSRMFSLAYSGQPIHLPDFFPEIVFQLNMITAPLTKRSSSFRSGFQPNISSAPKIPAPPNLPCPPHIPTNYSKDVIVNNQALYGESLERRLSVLHLPPTRMTLHSDINITAPSSSSFQPSDEPVPSDHTAVYPGFDFFTLAAHFLPAHDPEVKEIELKDQTSQQFPWLNLDFHISCQTSSLISARHQPGSDSTLLPASLHKRLRFRPTAAPYQITPSDSFLGNCLYRSWCQVYRRDPNVRLPFNEALFLECIAVNDYAQLSSKTQATIVANASRSDPDWRHTFVKIFAKSQHKVNDGSIFGPWKACQTLALMHDYVILTLGPVKKYQRLFDQLERPSHIYYHAGNTPHDLRRWCSKHLETSHCTTNDYTAFDQSQHGEAVVFEVLKMRRLSIPENLISLHVHLKTNVETQFGPLTCMRLTGEPGTYDDNTDYNLAVLNLQYDLRKTPTLVSGDDSYLSGTLSPRSNWPFVKELLHLRLKPSSLIDGLFCGYYLGPQGCIRNPLALFAKLMIAEDDGSAFDKLPSYLTEFSIGHGLGDSLWQLLPSDLVLYQSACFDYFCRKATRSQKILLQPGLVDQETLDKIALSAKFISRPFYSMLSSHARSLISTKFKLDSSLTTLQDPMVEFELLPFSNVQ.

The 162-residue stretch at 58 to 219 (SGLTSTPHPH…NQPVNALDWL (162 aa)) folds into the Alphavirus-like MT domain. Disordered stretches follow at residues 433–507 (APLS…PPLT) and 569–633 (PASP…PAPL). Residues 458–475 (SASQSTSLSLSASSQLLS) show a composition bias toward low complexity. Polar residues predominate over residues 491–500 (VSTSCPSASK). Positions 579–600 (HPLPPAQKPPRPPTTVPTPKPL) are enriched in pro residues. Residues 601-616 (ASPSQTQAAQPATQSP) show a composition bias toward low complexity. The Peptidase C21 domain occupies 627–781 (SLLPAPLETD…PLRAGSPPSR (155 aa)). Residues Cys680 and His766 each act as for protease activity in the active site. A disordered region spans residues 767 to 786 (FTAPDPLRAGSPPSRSQTNE). Residues 844–1001 (SGPSPRDRIF…RLLPFIDYYC (158 aa)) form the (+)RNA virus helicase ATP-binding domain. Residue 874-881 (GFAGCGKT) participates in ATP binding. One can recognise a (+)RNA virus helicase C-terminal domain in the interval 1002-1138 (YWSYRVPKCV…LPDFFPEIVF (137 aa)). Residues 1474–1580 (SHCTTNDYTA…SGTLSPRSNW (107 aa)) form the RdRp catalytic domain.

This sequence belongs to the Tymoviridae non-structural replication polyprotein family. Specific enzymatic cleavages by the host yield mature proteins.

The catalysed reaction is RNA(n) + a ribonucleoside 5'-triphosphate = RNA(n+1) + diphosphate. In terms of biological role, acts as a cysteine protease, methyltransferase and deubiquitinase. The cysteine protease activity cleaves the polyprotein giving rise to mature proteins. The methyltransferase domain is probably involved in viral RNA capping. RNA-directed RNA polymerase is responsible for the replication and transcription of the genome. This chain is Non-structural replication polyprotein, found in Erysimum latent virus (ELV).